The primary structure comprises 299 residues: 33 kDa chaperonin (299 aa).

Intrachain disulfides connect C238/C240 and C271/C274.

The protein belongs to the HSP33 family. Post-translationally, under oxidizing conditions two disulfide bonds are formed involving the reactive cysteines. Under reducing conditions zinc is bound to the reactive cysteines and the protein is inactive.

Its subcellular location is the cytoplasm. Functionally, redox regulated molecular chaperone. Protects both thermally unfolding and oxidatively damaged proteins from irreversible aggregation. Plays an important role in the bacterial defense system toward oxidative stress. The sequence is that of 33 kDa chaperonin from Alkaliphilus oremlandii (strain OhILAs) (Clostridium oremlandii (strain OhILAs)).